Here is a 328-residue protein sequence, read N- to C-terminus: Serine/threonine protein kinase RdoA (328 aa).

D201 (proton acceptor) is an active-site residue. Mg(2+) is bound by residues N206 and D217. D217 is a catalytic residue.

The protein belongs to the SrkA/RdoA protein kinase family. In terms of assembly, monomer. Mg(2+) serves as cofactor.

It is found in the cytoplasm. It catalyses the reaction L-seryl-[protein] + ATP = O-phospho-L-seryl-[protein] + ADP + H(+). The catalysed reaction is L-threonyl-[protein] + ATP = O-phospho-L-threonyl-[protein] + ADP + H(+). A protein kinase that (auto)phosphorylates on Ser and Thr residues, probably involved in the extracytoplasmic stress response. Probably acts to suppress the effects of stress linked to accumulation of reactive oxygen species. This Salmonella typhimurium (strain LT2 / SGSC1412 / ATCC 700720) protein is Serine/threonine protein kinase RdoA.